We begin with the raw amino-acid sequence, 413 residues long: Low-salt glycan biosynthesis hexosyltransferase Agl6 (413 aa).

A disordered region spans residues 1-27 (MSTRSQSESPVDAPQQGATNGQSASDI). Residues 16-25 (QGATNGQSAS) are compositionally biased toward polar residues. 4 helical membrane-spanning segments follow: residues 270–290 (LFSA…VLAW), 304–324 (TGIG…FGAF), 355–375 (IGSV…FTWV), and 389–409 (VVAT…FLLG).

This sequence belongs to the glycosyltransferase 2 family.

It localises to the membrane. It functions in the pathway protein modification; protein glycosylation. It participates in cell surface structure biogenesis; S-layer biogenesis. In terms of biological role, hexosyltransferase involved in N-glycan biosynthetic pathway that takes place under low-salt conditions (1.75 M instead of 3.4 M). Participates in the formation of the tetrasaccharide present at 'Asn-532' of S-layer glycoprotein Csg, consisting of a sulfated hexose, 2 hexoses and rhamnose. Together with Agl5, mediates the addition of sugars 1 and 2 to dolichol phosphate in the tetrasaccharide. This chain is Low-salt glycan biosynthesis hexosyltransferase Agl6 (agl6), found in Haloferax volcanii (strain ATCC 29605 / DSM 3757 / JCM 8879 / NBRC 14742 / NCIMB 2012 / VKM B-1768 / DS2) (Halobacterium volcanii).